The primary structure comprises 648 residues: Threonine--tRNA ligase (648 aa).

The 61-residue stretch at 1-61 (MIKITLPDGS…TTDGNLILYT (61 aa)) folds into the TGS domain. The segment at 240–539 (DHRKLGKELE…LLEHTAGNFP (300 aa)) is catalytic. Residues cysteine 335, histidine 386, and histidine 516 each contribute to the Zn(2+) site.

The protein belongs to the class-II aminoacyl-tRNA synthetase family. Homodimer. Zn(2+) is required as a cofactor.

The protein localises to the cytoplasm. The enzyme catalyses tRNA(Thr) + L-threonine + ATP = L-threonyl-tRNA(Thr) + AMP + diphosphate + H(+). In terms of biological role, catalyzes the attachment of threonine to tRNA(Thr) in a two-step reaction: L-threonine is first activated by ATP to form Thr-AMP and then transferred to the acceptor end of tRNA(Thr). Also edits incorrectly charged L-seryl-tRNA(Thr). In Flavobacterium johnsoniae (strain ATCC 17061 / DSM 2064 / JCM 8514 / BCRC 14874 / CCUG 350202 / NBRC 14942 / NCIMB 11054 / UW101) (Cytophaga johnsonae), this protein is Threonine--tRNA ligase.